A 507-amino-acid polypeptide reads, in one-letter code: Glycerol kinase (507 aa).

Position 15 (T15) interacts with ADP. Residues T15, T16, and S17 each coordinate ATP. T15 provides a ligand contact to sn-glycerol 3-phosphate. R19 is an ADP binding site. Sn-glycerol 3-phosphate is bound by residues R85, E86, Y137, and D250. Glycerol-binding residues include R85, E86, Y137, D250, and Q251. ADP is bound by residues T272, G316, and G418. T272, G316, and G418 together coordinate ATP.

This sequence belongs to the FGGY kinase family.

The enzyme catalyses glycerol + ATP = sn-glycerol 3-phosphate + ADP + H(+). The protein operates within polyol metabolism; glycerol degradation via glycerol kinase pathway; sn-glycerol 3-phosphate from glycerol: step 1/1. Inhibited by fructose 1,6-bisphosphate (FBP). In terms of biological role, key enzyme in the regulation of glycerol uptake and metabolism. Catalyzes the phosphorylation of glycerol to yield sn-glycerol 3-phosphate. This Malacoplasma penetrans (strain HF-2) (Mycoplasma penetrans) protein is Glycerol kinase.